We begin with the raw amino-acid sequence, 148 residues long: uncharacterized protein (148 aa).

The tract at residues 55–148 is disordered; the sequence is KMRCGESGAG…RNQGQLYPQP (94 aa). The segment covering 68–104 has biased composition (polar residues); it reads RSNSAEVSSSQPALASKSQSKWGPTSNNPRGALTTTE.

This is an uncharacterized protein from Homo sapiens (Human).